The primary structure comprises 919 residues: Probable dipeptidyl-aminopeptidase B (919 aa).

Positions 1-10 (MRPSDDHGET) are enriched in basic and acidic residues. The segment at 1–50 (MRPSDDHGETSEFLPITRSRSVSAASQTSTDSSLSTESLFPGEQKPFPNV) is disordered. The Cytoplasmic segment spans residues 1–92 (MRPSDDHGET…AATGGGRARR (92 aa)). Residues 21-38 (SVSAASQTSTDSSLSTES) are compositionally biased toward low complexity. A helical; Signal-anchor for type II membrane protein transmembrane segment spans residues 93–113 (IFWILVLLCLGGWLLAFALFL). Topologically, residues 114 to 919 (TGGRANYQTA…MKRSLPLLYP (806 aa)) are vacuolar. Residues Asn-200, Asn-352, and Asn-643 are each glycosylated (N-linked (GlcNAc...) asparagine). Ser-757 acts as the Charge relay system in catalysis. N-linked (GlcNAc...) asparagine glycosylation occurs at Asn-811. Active-site charge relay system residues include Asp-834 and His-867.

The protein belongs to the peptidase S9B family.

The protein resides in the vacuole membrane. The catalysed reaction is Release of an N-terminal dipeptide, Xaa-Yaa-|-Zaa-, from a polypeptide, preferentially when Yaa is Pro, provided Zaa is neither Pro nor hydroxyproline.. Functionally, type IV dipeptidyl-peptidase which removes N-terminal dipeptides sequentially from polypeptides having unsubstituted N-termini provided that the penultimate residue is proline. In Neosartorya fischeri (strain ATCC 1020 / DSM 3700 / CBS 544.65 / FGSC A1164 / JCM 1740 / NRRL 181 / WB 181) (Aspergillus fischerianus), this protein is Probable dipeptidyl-aminopeptidase B (dapB).